A 228-amino-acid polypeptide reads, in one-letter code: UPF0758 protein Reut_A2732 (228 aa).

In terms of domain architecture, MPN spans 102–224 (GLDSPAAVRS…VHSFAEHGEL (123 aa)). Residues histidine 173, histidine 175, and aspartate 186 each contribute to the Zn(2+) site. Positions 173–186 (HNHPSGCCTPSQSD) match the JAMM motif motif.

It belongs to the UPF0758 family.

The protein is UPF0758 protein Reut_A2732 of Cupriavidus pinatubonensis (strain JMP 134 / LMG 1197) (Cupriavidus necator (strain JMP 134)).